The sequence spans 339 residues: GTP 3',8-cyclase (339 aa).

A Radical SAM core domain is found at 20 to 241 (NFDRKFEYLR…WTQKQSLSHD (222 aa)). Arginine 29 is a GTP binding site. 2 residues coordinate [4Fe-4S] cluster: cysteine 36 and cysteine 40. Tyrosine 42 serves as a coordination point for S-adenosyl-L-methionine. Cysteine 43 lines the [4Fe-4S] cluster pocket. Residue arginine 78 participates in GTP binding. Residue glycine 82 participates in S-adenosyl-L-methionine binding. Residue threonine 109 participates in GTP binding. Serine 133 is an S-adenosyl-L-methionine binding site. Lysine 170 provides a ligand contact to GTP. Residue methionine 204 coordinates S-adenosyl-L-methionine. Residues cysteine 267 and cysteine 270 each contribute to the [4Fe-4S] cluster site. Position 272–274 (272–274 (RLR)) interacts with GTP. Cysteine 284 is a binding site for [4Fe-4S] cluster.

The protein belongs to the radical SAM superfamily. MoaA family. In terms of assembly, monomer and homodimer. It depends on [4Fe-4S] cluster as a cofactor.

The catalysed reaction is GTP + AH2 + S-adenosyl-L-methionine = (8S)-3',8-cyclo-7,8-dihydroguanosine 5'-triphosphate + 5'-deoxyadenosine + L-methionine + A + H(+). It functions in the pathway cofactor biosynthesis; molybdopterin biosynthesis. In terms of biological role, catalyzes the cyclization of GTP to (8S)-3',8-cyclo-7,8-dihydroguanosine 5'-triphosphate. This is GTP 3',8-cyclase from Psychromonas ingrahamii (strain DSM 17664 / CCUG 51855 / 37).